We begin with the raw amino-acid sequence, 455 residues long: ATP-dependent protease ATPase subunit HslU (455 aa).

Residues valine 23, 65 to 70 (GVGKTE), aspartate 266, glutamate 333, and arginine 405 contribute to the ATP site.

It belongs to the ClpX chaperone family. HslU subfamily. As to quaternary structure, a double ring-shaped homohexamer of HslV is capped on each side by a ring-shaped HslU homohexamer. The assembly of the HslU/HslV complex is dependent on binding of ATP.

The protein localises to the cytoplasm. ATPase subunit of a proteasome-like degradation complex; this subunit has chaperone activity. The binding of ATP and its subsequent hydrolysis by HslU are essential for unfolding of protein substrates subsequently hydrolyzed by HslV. HslU recognizes the N-terminal part of its protein substrates and unfolds these before they are guided to HslV for hydrolysis. The protein is ATP-dependent protease ATPase subunit HslU of Xanthomonas axonopodis pv. citri (strain 306).